The primary structure comprises 460 residues: Bifunctional protein GlmU (460 aa).

The interval 1 to 235 (MALSAAIVLA…PLTVEGVNDR (235 aa)) is pyrophosphorylase. Residues 9–12 (LAAG), Lys-23, Gln-76, and 81–82 (GT) contribute to the UDP-N-acetyl-alpha-D-glucosamine site. Asp-109 is a Mg(2+) binding site. Residues Gly-146, Glu-161, Asn-176, and Asn-233 each coordinate UDP-N-acetyl-alpha-D-glucosamine. A Mg(2+)-binding site is contributed by Asn-233. Residues 236 to 256 (VQLAALSKTYNRRVCERWMRD) form a linker region. Residues 257–460 (GVTILDPETT…VEGWKPAWER (204 aa)) form an N-acetyltransferase region. Positions 338 and 356 each coordinate UDP-N-acetyl-alpha-D-glucosamine. Catalysis depends on His-368, which acts as the Proton acceptor. UDP-N-acetyl-alpha-D-glucosamine is bound by residues Tyr-371 and Asn-382. Residues 391 to 392 (NY) and Ala-428 each bind acetyl-CoA.

The protein in the N-terminal section; belongs to the N-acetylglucosamine-1-phosphate uridyltransferase family. In the C-terminal section; belongs to the transferase hexapeptide repeat family. Homotrimer. Mg(2+) is required as a cofactor.

The protein resides in the cytoplasm. The enzyme catalyses alpha-D-glucosamine 1-phosphate + acetyl-CoA = N-acetyl-alpha-D-glucosamine 1-phosphate + CoA + H(+). It catalyses the reaction N-acetyl-alpha-D-glucosamine 1-phosphate + UTP + H(+) = UDP-N-acetyl-alpha-D-glucosamine + diphosphate. The protein operates within nucleotide-sugar biosynthesis; UDP-N-acetyl-alpha-D-glucosamine biosynthesis; N-acetyl-alpha-D-glucosamine 1-phosphate from alpha-D-glucosamine 6-phosphate (route II): step 2/2. It participates in nucleotide-sugar biosynthesis; UDP-N-acetyl-alpha-D-glucosamine biosynthesis; UDP-N-acetyl-alpha-D-glucosamine from N-acetyl-alpha-D-glucosamine 1-phosphate: step 1/1. It functions in the pathway bacterial outer membrane biogenesis; LPS lipid A biosynthesis. Catalyzes the last two sequential reactions in the de novo biosynthetic pathway for UDP-N-acetylglucosamine (UDP-GlcNAc). The C-terminal domain catalyzes the transfer of acetyl group from acetyl coenzyme A to glucosamine-1-phosphate (GlcN-1-P) to produce N-acetylglucosamine-1-phosphate (GlcNAc-1-P), which is converted into UDP-GlcNAc by the transfer of uridine 5-monophosphate (from uridine 5-triphosphate), a reaction catalyzed by the N-terminal domain. The polypeptide is Bifunctional protein GlmU (Bifidobacterium longum (strain DJO10A)).